The primary structure comprises 397 residues: Succinyl-diaminopimelate desuccinylase (397 aa).

Histidine 73 provides a ligand contact to Zn(2+). Aspartate 75 is a catalytic residue. Aspartate 106 contributes to the Zn(2+) binding site. Residue glutamate 140 is the Proton acceptor of the active site. Zn(2+) is bound by residues glutamate 141, glutamate 169, and histidine 366.

Belongs to the peptidase M20A family. DapE subfamily. In terms of assembly, homodimer. Zn(2+) serves as cofactor. Requires Co(2+) as cofactor.

The enzyme catalyses N-succinyl-(2S,6S)-2,6-diaminopimelate + H2O = (2S,6S)-2,6-diaminopimelate + succinate. It functions in the pathway amino-acid biosynthesis; L-lysine biosynthesis via DAP pathway; LL-2,6-diaminopimelate from (S)-tetrahydrodipicolinate (succinylase route): step 3/3. In terms of biological role, catalyzes the hydrolysis of N-succinyl-L,L-diaminopimelic acid (SDAP), forming succinate and LL-2,6-diaminopimelate (DAP), an intermediate involved in the bacterial biosynthesis of lysine and meso-diaminopimelic acid, an essential component of bacterial cell walls. The sequence is that of Succinyl-diaminopimelate desuccinylase from Rhizobium rhizogenes (strain K84 / ATCC BAA-868) (Agrobacterium radiobacter).